Reading from the N-terminus, the 502-residue chain is ATP synthase subunit alpha (502 aa).

The tract at residues 115–135 (VDGLGPINTTNTRPIESPAPG) is disordered. Position 169–176 (169–176 (GDRQTGKT)) interacts with ATP.

It belongs to the ATPase alpha/beta chains family. In terms of assembly, F-type ATPases have 2 components, CF(1) - the catalytic core - and CF(0) - the membrane proton channel. CF(1) has five subunits: alpha(3), beta(3), gamma(1), delta(1), epsilon(1). CF(0) has three main subunits: a(1), b(2) and c(9-12). The alpha and beta chains form an alternating ring which encloses part of the gamma chain. CF(1) is attached to CF(0) by a central stalk formed by the gamma and epsilon chains, while a peripheral stalk is formed by the delta and b chains.

It localises to the cell membrane. It catalyses the reaction ATP + H2O + 4 H(+)(in) = ADP + phosphate + 5 H(+)(out). Produces ATP from ADP in the presence of a proton gradient across the membrane. The alpha chain is a regulatory subunit. The polypeptide is ATP synthase subunit alpha (Bacillus cereus (strain G9842)).